The chain runs to 909 residues: Probable DNA-directed RNA polymerase subunit beta (909 aa).

Belongs to the RNA polymerase beta chain family.

It catalyses the reaction RNA(n) + a ribonucleoside 5'-triphosphate = RNA(n+1) + diphosphate. Functionally, required for late and very late gene expression. May be a component of the novel RNA polymerase activity induced by baculovirus infection. The polypeptide is Probable DNA-directed RNA polymerase subunit beta (LEF-8) (Lepidoptera (butterflies and moths)).